Reading from the N-terminus, the 182-residue chain is CDP-diacylglycerol--glycerol-3-phosphate 3-phosphatidyltransferase (182 aa).

At 1–12 the chain is on the cytoplasmic side; sequence MQLNIPTWLTLF. A helical membrane pass occupies residues 13–37; that stretch reads RVVLIPFFVLAFYLPFVWAPMVCAI. Topologically, residues 38 to 60 are periplasmic; it reads IFVFAAATDWFDGFLARRWKQTT. Residues 61-81 traverse the membrane as a helical segment; that stretch reads RFGAFLDPVADKVMVAIALVL. The Cytoplasmic segment spans residues 82–86; that stretch reads VAEHY. The chain crosses the membrane as a helical span at residues 87–107; sequence HVWWITLPAATMIAREIIISS. The Periplasmic portion of the chain corresponds to 108–145; it reads LREWMAEIGKRSSVAVSWIGKVKTTAQMGSLVGLLWRP. A helical membrane pass occupies residues 146 to 168; sequence DHNIELASFVLLYIAAVLTFWSM. At 169 to 181 the chain is on the cytoplasmic side; that stretch reads FQYLNAAWKDLLE.

Belongs to the CDP-alcohol phosphatidyltransferase class-I family.

The protein resides in the cell inner membrane. The catalysed reaction is a CDP-1,2-diacyl-sn-glycerol + sn-glycerol 3-phosphate = a 1,2-diacyl-sn-glycero-3-phospho-(1'-sn-glycero-3'-phosphate) + CMP + H(+). Its pathway is phospholipid metabolism; phosphatidylglycerol biosynthesis; phosphatidylglycerol from CDP-diacylglycerol: step 1/2. In terms of biological role, catalyzes the conversion of cytidine diphosphate diacylglycerol (CDP-DG) and glycerol 3-phosphate into phosphatidylglycerol. Essential for the synthesis of anionic phospholipids, thereby playing a role in balancing the ratio of zwitterionic and anionic phospholipids, which is thought to be important for normal membrane function. This is CDP-diacylglycerol--glycerol-3-phosphate 3-phosphatidyltransferase from Yersinia enterocolitica serotype O:8 / biotype 1B (strain NCTC 13174 / 8081).